The following is a 341-amino-acid chain: MITESRQMLDKRNRPLRDLRISVTDRCNFRCTYCMPAELFGPDYPFLKKEELLSFEELERLATLFVTRFGVEKIRLTGGEPLMRKDMPELIKKLARIPGIRDIAMTTNGSLLPVYAKRLKEAGLKRVTISLDSLEDERFKKINGRGVSVSKVLEGIEAAKQAGLGVKINMVVQKGVNEKDILPMARYFKEKGHILRFIEFMDVGNTNQWEKKDVMTKAEIIDLINKHMPVEPIAPNYIGEVASRFRYLDGSGEIGVISSVSDAFCGSCNRARLSARGELFTCLFASSGFDLRAPVRQELSDDELSEMIGTVWKNRIDQYSVDRTLSKASGKKKVEMSYIGG.

The Radical SAM core domain maps to 11-231 (KRNRPLRDLR…DLINKHMPVE (221 aa)). Arg-20 contributes to the GTP binding site. Residues Cys-27 and Cys-31 each coordinate [4Fe-4S] cluster. Residue Tyr-33 participates in S-adenosyl-L-methionine binding. Cys-34 lines the [4Fe-4S] cluster pocket. A GTP-binding site is contributed by Arg-75. Residue Gly-79 participates in S-adenosyl-L-methionine binding. Thr-106 serves as a coordination point for GTP. An S-adenosyl-L-methionine-binding site is contributed by Ser-130. Residue Lys-167 coordinates GTP. An S-adenosyl-L-methionine-binding site is contributed by Met-201. [4Fe-4S] cluster contacts are provided by Cys-265 and Cys-268. 270-272 (RAR) contacts GTP. Cys-282 provides a ligand contact to [4Fe-4S] cluster.

It belongs to the radical SAM superfamily. MoaA family. In terms of assembly, monomer and homodimer. The cofactor is [4Fe-4S] cluster.

It carries out the reaction GTP + AH2 + S-adenosyl-L-methionine = (8S)-3',8-cyclo-7,8-dihydroguanosine 5'-triphosphate + 5'-deoxyadenosine + L-methionine + A + H(+). Its pathway is cofactor biosynthesis; molybdopterin biosynthesis. Catalyzes the cyclization of GTP to (8S)-3',8-cyclo-7,8-dihydroguanosine 5'-triphosphate. Required for both nitrate assimilation and respiration. The sequence is that of GTP 3',8-cyclase from Bacillus subtilis (strain 168).